Here is a 609-residue protein sequence, read N- to C-terminus: UvrABC system protein C (609 aa).

The region spanning 15-92 (TGSGVYQMQD…IKQFRPRYNV (78 aa)) is the GIY-YIG domain. The 36-residue stretch at 202–237 (DQVIIKLTERMEVASENLVFEEAAHYRDQIRQLRRL) folds into the UVR domain.

It belongs to the UvrC family. As to quaternary structure, interacts with UvrB in an incision complex.

The protein localises to the cytoplasm. Its function is as follows. The UvrABC repair system catalyzes the recognition and processing of DNA lesions. UvrC both incises the 5' and 3' sides of the lesion. The N-terminal half is responsible for the 3' incision and the C-terminal half is responsible for the 5' incision. The chain is UvrABC system protein C from Coxiella burnetii (strain RSA 331 / Henzerling II).